The chain runs to 559 residues: Small ribosomal subunit protein bS1 (559 aa).

S1 motif domains follow at residues 21-87 (GSII…LSRE), 105-171 (SETV…VSRR), 192-260 (GIEI…LGLK), 277-347 (GIKL…LGLK), 364-434 (GIHV…LGIK), and 451-520 (GAII…LTFH).

This sequence belongs to the bacterial ribosomal protein bS1 family.

Functionally, binds mRNA; thus facilitating recognition of the initiation point. It is needed to translate mRNA with a short Shine-Dalgarno (SD) purine-rich sequence. The polypeptide is Small ribosomal subunit protein bS1 (rpsA) (Buchnera aphidicola subsp. Schizaphis graminum (strain Sg)).